Here is a 395-residue protein sequence, read N- to C-terminus: RNA polymerase II elongation factor ELL3 (395 aa).

Disordered stretches follow at residues 124–149 (SSLQRHNRTEDARDRESWQNVGDYPE), 163–182 (VPDPLASSQGQSLPGSSREH), 194–218 (LPNRDPDQALPPSASQKHVDKKRPA), and 233–279 (LAPS…SLSP). Over residues 130–140 (NRTEDARDRES) the composition is skewed to basic and acidic residues. The span at 168–177 (ASSQGQSLPG) shows a compositional bias: polar residues. Acidic residues predominate over residues 246-258 (LQEEDWEQEDKDE). A compositionally biased stretch (polar residues) spans 268–277 (PSVQADSESL). Residues 283 to 393 (PDYLLQYRAI…LILEFEEKNR (111 aa)) form the OCEL domain.

It belongs to the ELL/occludin family. Interacts with AFF4. Component of the super elongation complex (SEC), at least composed of EAF1, EAF2, CDK9, MLLT3/AF9, AFF (AFF1 or AFF4), the P-TEFb complex and ELL (ELL, ELL2 or ELL3). Component of the little elongation complex (LEC), at least composed of ELL (ELL, ELL2 or ELL3), ZC3H8, ICE1 and ICE2.

Its subcellular location is the nucleus. Its function is as follows. Enhancer-binding elongation factor that specifically binds enhancers in embryonic stem cells (ES cells), marks them, and is required for their future activation during stem cell specification. Elongation factor component of the super elongation complex (SEC), a complex required to increase the catalytic rate of RNA polymerase II transcription by suppressing transient pausing by the polymerase at multiple sites along the DNA. Component of the little elongation complex (LEC), a complex required to regulate small nuclear RNA (snRNA) gene transcription by RNA polymerase II and III. Does not only bind to enhancer regions of active genes, but also marks the enhancers that are in a poised or inactive state in ES cells and is required for establishing proper RNA polymerase II occupancy at developmentally regulated genes in a cohesin-dependent manner. Probably required for priming developmentally regulated genes for later recruitment of the super elongation complex (SEC), for transcriptional activation during differentiation. Required for recruitment of P-TEFb within SEC during differentiation. Probably preloaded on germ cell chromatin, suggesting that it may prime gene activation by marking enhancers as early as in the germ cells. Promoting epithelial-mesenchymal transition (EMT). The sequence is that of RNA polymerase II elongation factor ELL3 (ELL3) from Bos taurus (Bovine).